We begin with the raw amino-acid sequence, 156 residues long: Ribosomal RNA large subunit methyltransferase H (156 aa).

Residues leucine 73, glycine 104, and 123 to 128 (LSSLTL) contribute to the S-adenosyl-L-methionine site.

This sequence belongs to the RNA methyltransferase RlmH family. As to quaternary structure, homodimer.

Its subcellular location is the cytoplasm. It catalyses the reaction pseudouridine(1915) in 23S rRNA + S-adenosyl-L-methionine = N(3)-methylpseudouridine(1915) in 23S rRNA + S-adenosyl-L-homocysteine + H(+). In terms of biological role, specifically methylates the pseudouridine at position 1915 (m3Psi1915) in 23S rRNA. In Bordetella petrii (strain ATCC BAA-461 / DSM 12804 / CCUG 43448), this protein is Ribosomal RNA large subunit methyltransferase H.